Here is a 374-residue protein sequence, read N- to C-terminus: uncharacterized protein (374 aa).

Residues 1-46 (MVNEEEKDLTAEGDSNNTGVSPDSIKNKTLDFYPKEKTTERKTRSR) are disordered. The span at 25-46 (IKNKTLDFYPKEKTTERKTRSR) shows a compositional bias: basic and acidic residues. The next 6 helical transmembrane spans lie at 70–90 (YAYIIFAAFLGMASYDYFIAA), 127–147 (WVFYFVFNIPLFIFGVIKIGI), 153–173 (TIVYIGLQNGFHFAFAYIPVI), 199–219 (IWLFVFAAVAGILNGIAYGLV), 242–262 (ISIANYNRIVNYIIIVVMLAI), and 312–332 (YFFGPALFASYLFVVVQAITI).

To M.genitalium MG432 and MG443.

The protein localises to the cell membrane. This is an uncharacterized protein from Spiroplasma citri.